A 313-amino-acid chain; its full sequence is D-alanine--D-alanine ligase (313 aa).

In terms of domain architecture, ATP-grasp spans 108–308; sequence KLVWQQTGVP…YSELVVKVLS (201 aa). Residue 138 to 193 coordinates ATP; the sequence is VAKLGLPLFVKPASEGSSVAVLKVKTADALPAALAEAATHDKIVIVEKSIEGGGEY. The Mg(2+) site is built by aspartate 262, glutamate 275, and asparagine 277.

The protein belongs to the D-alanine--D-alanine ligase family. Requires Mg(2+) as cofactor. Mn(2+) serves as cofactor.

The protein resides in the cytoplasm. The enzyme catalyses 2 D-alanine + ATP = D-alanyl-D-alanine + ADP + phosphate + H(+). The protein operates within cell wall biogenesis; peptidoglycan biosynthesis. Its function is as follows. Cell wall formation. This Burkholderia multivorans (strain ATCC 17616 / 249) protein is D-alanine--D-alanine ligase.